The primary structure comprises 747 residues: Tegument protein UL46 homolog (747 aa).

Disordered stretches follow at residues 437–484 (FCCP…SPRT), 525–593 (QRSD…DYMR), 611–665 (TPYM…PEVV), and 689–747 (SASR…VSSL). The span at 465-484 (LRSSRQLPTSPPSNIVSPRT) shows a compositional bias: polar residues. A compositionally biased stretch (low complexity) spans 528 to 540 (DSSSSDNSTCSST). Residues 541 to 553 (ETQYITLPSTPSP) show a composition bias toward polar residues. Basic and acidic residues-rich tracts occupy residues 707–724 (VCRE…DGFI) and 736–747 (KHPDQTERVSSL).

The protein belongs to the herpesviridae HHV-1 VP11/12 protein family.

The protein localises to the virion tegument. It is found in the host cell membrane. Its function is as follows. Modulates alpha trans-inducing factor-dependent activation of alpha genes. This is Tegument protein UL46 homolog from Equine herpesvirus 1 (strain Ab4p) (EHV-1).